We begin with the raw amino-acid sequence, 691 residues long: Penicillin-binding protein 2D (691 aa).

Topologically, residues 1 to 19 (MDAMTNKRLRLTLKTVRAF) are cytoplasmic. A helical; Signal-anchor for type II membrane protein membrane pass occupies residues 20 to 40 (IFLGAFAALAAAAVFMTVILI). The Extracellular portion of the chain corresponds to 41–691 (AKYQGAPSVQ…WWDKWLGRHH (651 aa)). Positions 55 to 223 (TILYASDGSK…PSGYSPYVNE (169 aa)) are transglycosylase. The active-site Proton donor; for transglycosylase activity is the Glu-94. A transpeptidase region spans residues 327–605 (VGFSAIDPRT…AKTIWADFME (279 aa)). Residue Ser-365 is the Acyl-ester intermediate; for transpeptidase activity of the active site. Positions 663–691 (AKQTKDRLPSKEKPASEKKWWDKWLGRHH) are disordered. The segment covering 664–691 (KQTKDRLPSKEKPASEKKWWDKWLGRHH) has biased composition (basic and acidic residues).

This sequence in the N-terminal section; belongs to the glycosyltransferase 51 family. The protein in the C-terminal section; belongs to the transpeptidase family.

Its subcellular location is the cell membrane. It catalyses the reaction [GlcNAc-(1-&gt;4)-Mur2Ac(oyl-L-Ala-gamma-D-Glu-L-Lys-D-Ala-D-Ala)](n)-di-trans,octa-cis-undecaprenyl diphosphate + beta-D-GlcNAc-(1-&gt;4)-Mur2Ac(oyl-L-Ala-gamma-D-Glu-L-Lys-D-Ala-D-Ala)-di-trans,octa-cis-undecaprenyl diphosphate = [GlcNAc-(1-&gt;4)-Mur2Ac(oyl-L-Ala-gamma-D-Glu-L-Lys-D-Ala-D-Ala)](n+1)-di-trans,octa-cis-undecaprenyl diphosphate + di-trans,octa-cis-undecaprenyl diphosphate + H(+). It carries out the reaction Preferential cleavage: (Ac)2-L-Lys-D-Ala-|-D-Ala. Also transpeptidation of peptidyl-alanyl moieties that are N-acyl substituents of D-alanine.. The protein operates within cell wall biogenesis; peptidoglycan biosynthesis. Its function is as follows. Involved in the polymerization and cross-linking of spore peptidoglycan. May be required for synthesis of the spore germ cell wall, the first layer of peptidoglycan synthesized on the surface of the inner forespore membrane. The chain is Penicillin-binding protein 2D (pbpG) from Bacillus subtilis (strain 168).